The sequence spans 182 residues: ATP-dependent protease subunit HslV (182 aa).

Thr2 is a catalytic residue. The Na(+) site is built by Gly157, Cys160, and Thr163.

It belongs to the peptidase T1B family. HslV subfamily. In terms of assembly, a double ring-shaped homohexamer of HslV is capped on each side by a ring-shaped HslU homohexamer. The assembly of the HslU/HslV complex is dependent on binding of ATP.

The protein resides in the cytoplasm. The catalysed reaction is ATP-dependent cleavage of peptide bonds with broad specificity.. Allosterically activated by HslU binding. In terms of biological role, protease subunit of a proteasome-like degradation complex believed to be a general protein degrading machinery. This Vibrio atlanticus (strain LGP32) (Vibrio splendidus (strain Mel32)) protein is ATP-dependent protease subunit HslV.